Reading from the N-terminus, the 430-residue chain is Trigger factor (430 aa).

The PPIase FKBP-type domain maps to 163-248; it reads GNIAIIDFKG…IKDIKVKELP (86 aa).

Belongs to the FKBP-type PPIase family. Tig subfamily.

It localises to the cytoplasm. It catalyses the reaction [protein]-peptidylproline (omega=180) = [protein]-peptidylproline (omega=0). Functionally, involved in protein export. Acts as a chaperone by maintaining the newly synthesized protein in an open conformation. Functions as a peptidyl-prolyl cis-trans isomerase. The polypeptide is Trigger factor (Clostridium botulinum (strain ATCC 19397 / Type A)).